Here is a 231-residue protein sequence, read N- to C-terminus: Small ribosomal subunit protein uS2 (231 aa).

Residues 1-23 form a disordered region; that stretch reads MKVTNLSEKEERGGELTEAEKEE. The span at 7–23 shows a compositional bias: basic and acidic residues; sequence SEKEERGGELTEAEKEE.

This sequence belongs to the universal ribosomal protein uS2 family.

This Saccharolobus solfataricus (strain ATCC 35092 / DSM 1617 / JCM 11322 / P2) (Sulfolobus solfataricus) protein is Small ribosomal subunit protein uS2 (rps2).